Here is a 213-residue protein sequence, read N- to C-terminus: ATP synthase peripheral stalk subunit OSCP, mitochondrial (213 aa).

The N-terminal 23 residues, 1–23 (MAAPAVSGFSRQVRCFSTSVVRP), are a transit peptide targeting the mitochondrion. Positions 5–23 (AVSGFSRQVRCFSTSVVRP) match the SIFI-degron motif. 4 positions are modified to N6-acetyllysine: K54, K60, K70, and K73. Position 90 is an N6-succinyllysine (K90). Residues K100 and K158 each carry the N6-acetyllysine; alternate modification. An N6-succinyllysine; alternate mark is found at K100 and K158. An N6-acetyllysine mark is found at K172, K176, and K192. The residue at position 199 (K199) is an N6-succinyllysine.

The protein belongs to the ATPase delta chain family. As to quaternary structure, component of the ATP synthase complex composed at least of ATP5F1A/subunit alpha, ATP5F1B/subunit beta, ATP5MC1/subunit c (homooctomer), MT-ATP6/subunit a, MT-ATP8/subunit 8, ATP5ME/subunit e, ATP5MF/subunit f, ATP5MG/subunit g, ATP5MK/subunit k, ATP5MJ/subunit j, ATP5F1C/subunit gamma, ATP5F1D/subunit delta, ATP5F1E/subunit epsilon, ATP5PF/subunit F6, ATP5PB/subunit b, ATP5PD/subunit d, ATP5PO/subunit OSCP. ATP synthase complex consists of a soluble F(1) head domain (subunits alpha(3) and beta(3)) - the catalytic core - and a membrane F(0) domain - the membrane proton channel (subunits c, a, 8, e, f, g, k and j). These two domains are linked by a central stalk (subunits gamma, delta, and epsilon) rotating inside the F1 region and a stationary peripheral stalk (subunits F6, b, d, and OSCP). In terms of processing, in response to mitochondrial stress, the precursor protein is ubiquitinated by the SIFI complex in the cytoplasm before mitochondrial import, leading to its degradation. Within the SIFI complex, UBR4 initiates ubiquitin chain that are further elongated or branched by KCMF1.

It is found in the mitochondrion. The protein resides in the mitochondrion inner membrane. Subunit OSCP, of the mitochondrial membrane ATP synthase complex (F(1)F(0) ATP synthase or Complex V) that produces ATP from ADP in the presence of a proton gradient across the membrane which is generated by electron transport complexes of the respiratory chain. ATP synthase complex consist of a soluble F(1) head domain - the catalytic core - and a membrane F(1) domain - the membrane proton channel. These two domains are linked by a central stalk rotating inside the F(1) region and a stationary peripheral stalk. During catalysis, ATP synthesis in the catalytic domain of F(1) is coupled via a rotary mechanism of the central stalk subunits to proton translocation. In vivo, can only synthesize ATP although its ATP hydrolase activity can be activated artificially in vitro. Part of the complex F(0) domain. Part of the complex F(0) domain and the peripheric stalk, which acts as a stator to hold the catalytic alpha(3)beta(3) subcomplex and subunit a/ATP6 static relative to the rotary elements. In Rhinolophus ferrumequinum (Greater horseshoe bat), this protein is ATP synthase peripheral stalk subunit OSCP, mitochondrial.